A 170-amino-acid polypeptide reads, in one-letter code: Photosystem I assembly protein Ycf3 (170 aa).

TPR repeat units follow at residues 35–68 (AFTY…EIDP), 72–105 (SYIL…NPFL), and 120–153 (GEQA…TPGN).

The protein belongs to the Ycf3 family.

It localises to the plastid. The protein resides in the chloroplast thylakoid membrane. Essential for the assembly of the photosystem I (PSI) complex. May act as a chaperone-like factor to guide the assembly of the PSI subunits. This chain is Photosystem I assembly protein Ycf3, found in Zea mays (Maize).